A 389-amino-acid polypeptide reads, in one-letter code: Inactive serine/threonine-protein kinase ZRK12 (389 aa).

The Protein kinase domain occupies serine 41–isoleucine 342. ATP-binding positions include lysine 47–serine 55 and lysine 84. Tyrosine 129 bears the Phosphotyrosine mark. Position 214 is a phosphothreonine (threonine 214). Tyrosine 222 is subject to Phosphotyrosine.

Belongs to the protein kinase superfamily. Ser/Thr protein kinase family.

Together with RPP13L4/ZAR1, involved in the regulation of the ambient temperature-sensitive intersection of growth and immune response in the absence of pathogens. This chain is Inactive serine/threonine-protein kinase ZRK12, found in Arabidopsis thaliana (Mouse-ear cress).